Consider the following 386-residue polypeptide: 1-deoxy-D-xylulose 5-phosphate reductoisomerase (386 aa).

6 residues coordinate NADPH: S10, G11, S12, V13, N38, and N120. K121 is a 1-deoxy-D-xylulose 5-phosphate binding site. E122 contributes to the NADPH binding site. D146 contacts Mn(2+). 1-deoxy-D-xylulose 5-phosphate is bound by residues S147, E148, S172, and H195. E148 provides a ligand contact to Mn(2+). G201 contacts NADPH. 1-deoxy-D-xylulose 5-phosphate is bound by residues S208, N213, K214, and E217. E217 lines the Mn(2+) pocket.

This sequence belongs to the DXR family. Requires Mg(2+) as cofactor. Mn(2+) serves as cofactor.

It catalyses the reaction 2-C-methyl-D-erythritol 4-phosphate + NADP(+) = 1-deoxy-D-xylulose 5-phosphate + NADPH + H(+). The protein operates within isoprenoid biosynthesis; isopentenyl diphosphate biosynthesis via DXP pathway; isopentenyl diphosphate from 1-deoxy-D-xylulose 5-phosphate: step 1/6. Its function is as follows. Catalyzes the NADPH-dependent rearrangement and reduction of 1-deoxy-D-xylulose-5-phosphate (DXP) to 2-C-methyl-D-erythritol 4-phosphate (MEP). The chain is 1-deoxy-D-xylulose 5-phosphate reductoisomerase from Leptospira biflexa serovar Patoc (strain Patoc 1 / Ames).